The chain runs to 554 residues: D-3-phosphoglycerate dehydrogenase (554 aa).

Residues 177-178 (KI), Asp197, 256-258 (CSR), and Asp282 contribute to the NAD(+) site. The active site involves Arg258. Glu287 is a catalytic residue. His305 (proton donor) is an active-site residue. Position 305–308 (305–308 (HLGA)) interacts with NAD(+). The region spanning 482-554 (MLFTLHRDMP…GIRDAYTVKL (73 aa)) is the ACT domain.

Belongs to the D-isomer specific 2-hydroxyacid dehydrogenase family.

It carries out the reaction (2R)-3-phosphoglycerate + NAD(+) = 3-phosphooxypyruvate + NADH + H(+). It catalyses the reaction (R)-2-hydroxyglutarate + NAD(+) = 2-oxoglutarate + NADH + H(+). Its pathway is amino-acid biosynthesis; L-serine biosynthesis; L-serine from 3-phospho-D-glycerate: step 1/3. Functionally, catalyzes the reversible oxidation of 3-phospho-D-glycerate to 3-phosphonooxypyruvate, the first step of the phosphorylated L-serine biosynthesis pathway. Also catalyzes the reversible oxidation of 2-hydroxyglutarate to 2-oxoglutarate. The polypeptide is D-3-phosphoglycerate dehydrogenase (serA) (Synechocystis sp. (strain ATCC 27184 / PCC 6803 / Kazusa)).